We begin with the raw amino-acid sequence, 299 residues long: Kynurenine formamidase-like hydrolase fscH (299 aa).

An HGGXW motif is present at residues 48–52 (HGGAW). The disordered stretch occupies residues 90–110 (SPRTPSQPVPSGGHVGGEQQA). Serine 142 acts as the Nucleophile in catalysis.

The protein belongs to the kynurenine formamidase family.

The protein operates within secondary metabolite biosynthesis. Kynurenine formamidase-like hydrolase; part of the fragmented gene cluster that mediates the biosynthesis of fusarochromene, a tryptophan-derived metabolite closely related to a group of mycotoxins including fusarochromanone. Within the pathway, fscH converts the product of fscD into 4-hydroxykyrunenine. The first step of the pathway is the epimerization of L-tryptophan to D-tryptophan in the presence of the NRPS-like tryptophan epimerase fscC. D-tryptophan is subsequently hydroxylated by the tryptophan 6-hydroxylase fscE to yield 6-hydroxytryptophan. The pyrrole ring undergoes cleavaged by the tryptophan 2,3-dioxygenase fscD and is finally converted to 4-hydroxykyrunenine by the hydrolase fscH. The NRPS-like oxidoreductase fscA reduces the carboxyl group to primary alcohol and the DMATS-type prenyltransferase fscG performs prenylation, followed by the formation of a chromene ring catalyzed by the oxidoreductase fscI, which leads to desacetylfusarochromene. Epoxidation by fscF and rearrangement reactions of chromene double bonds convert compound desacetylfusarochromene to fusarochromanones. Although specific acetyltransferases were not found near the fsc gene cluster, several predicted enzymes containing the N-acetyltransferase superfamily domain are present in the genome of F.equiseti. These predicted enzymes may have the potential to convert desacetylfusarochromene to fusarochromene. This chain is Kynurenine formamidase-like hydrolase fscH, found in Fusarium equiseti (Fusarium scirpi).